Reading from the N-terminus, the 333-residue chain is Tubulin alpha chain (333 aa).

The GTP site is built by Ser-48, Gly-52, Thr-53, Thr-88, Asn-115, and Asn-137.

It belongs to the tubulin family. In terms of assembly, dimer of alpha and beta chains. A typical microtubule is a hollow water-filled tube with an outer diameter of 25 nm and an inner diameter of 15 nM. Alpha-beta heterodimers associate head-to-tail to form protofilaments running lengthwise along the microtubule wall with the beta-tubulin subunit facing the microtubule plus end conferring a structural polarity. Microtubules usually have 13 protofilaments but different protofilament numbers can be found in some organisms and specialized cells. Mg(2+) is required as a cofactor. Undergoes a tyrosination/detyrosination cycle, the cyclic removal and re-addition of a C-terminal tyrosine residue by the enzymes tubulin tyrosine carboxypeptidase (TTCP) and tubulin tyrosine ligase (TTL), respectively.

Its subcellular location is the cytoplasm. The protein localises to the cytoskeleton. It catalyses the reaction GTP + H2O = GDP + phosphate + H(+). Its function is as follows. Tubulin is the major constituent of microtubules, a cylinder consisting of laterally associated linear protofilaments composed of alpha- and beta-tubulin heterodimers. Microtubules grow by the addition of GTP-tubulin dimers to the microtubule end, where a stabilizing cap forms. Below the cap, tubulin dimers are in GDP-bound state, owing to GTPase activity of alpha-tubulin. The sequence is that of Tubulin alpha chain (tuba) from Dictyostelium purpureum (Slime mold).